Here is a 170-residue protein sequence, read N- to C-terminus: Cathelicidin antimicrobial peptide (170 aa).

Residues 1–30 form the signal peptide; it reads MKTQRDGHSLGGWSLMLLLLGLLMPLAIVA. Positions 31 to 131 are cleaved as a propeptide — cathelin-like domain (CLD); that stretch reads QVLSYKEAVL…DISCDKDNRR (101 aa). Cystine bridges form between C86–C97 and C108–C125. Positions 150 to 162 are active core; it reads FKRIVQRIKDFLQ.

The protein belongs to the cathelicidin family. As to quaternary structure, monomer, homodimer or homotrimer (in vitro). Oligomerizes as tetra- or hexamer in solution (in vitro). In terms of processing, proteolytically cleaved by proteinase PRTN3 into antibacterial peptide LL-37. Proteolytically cleaved by cathepsin CTSG and neutrophil elastase ELANE. Post-translationally, resistant to proteolytic degradation in solution, and when bound to both zwitterionic (mimicking mammalian membranes) and negatively charged membranes (mimicking bacterial membranes). After secretion onto the skin surface, the CAMP gene product is processed by a serine protease-dependent mechanism into multiple novel antimicrobial peptides distinct from and shorter than cathelicidin LL-37. These peptides show enhanced antimicrobial action, acquiring the ability to kill skin pathogens such as S.aureus, E.coli and C.albicans. These peptides have lost the ability to stimulate CXCL8/IL8 release from keratinocytes. The peptides act synergistically, killing bacteria at lower concentrations when present together, and maintain activity at increased salt condition.

The protein localises to the secreted. It localises to the vesicle. Its function is as follows. Antimicrobial protein that is an integral component of the innate immune system. Binds to bacterial lipopolysaccharides (LPS). Acts via neutrophil N-formyl peptide receptors to enhance the release of CXCL2. Postsecretory processing generates multiple cathelicidin antimicrobial peptides with various lengths which act as a topical antimicrobial defense in sweat on skin. The unprocessed precursor form, cathelicidin antimicrobial peptide, inhibits the growth of Gram-negative E.coli and E.aerogenes with efficiencies comparable to that of the mature peptide LL-37 (in vitro). Antimicrobial peptide that is an integral component of the innate immune system. Binds to bacterial lipopolysaccharides (LPS). Causes membrane permeabilization by forming transmembrane pores (in vitro). Causes lysis of E.coli. Exhibits antimicrobial activity against Gram-negative bacteria such as P.aeruginosa, S.typhimurium, E.aerogenes, E.coli and P.syringae, Gram-positive bacteria such as L.monocytogenes, S.epidermidis, S.pyogenes and S.aureus, as well as vancomycin-resistant enterococci (in vitro). Exhibits antimicrobial activity against methicillin-resistant S.aureus, P.mirabilis, and C.albicans in low-salt media, but not in media containing 100 mM NaCl (in vitro). Forms chiral supramolecular assemblies with quinolone signal (PQS) molecules of P.aeruginosa, which may lead to interference of bacterial quorum signaling and perturbance of bacterial biofilm formation. May form supramolecular fiber-like assemblies on bacterial membranes. Induces cytokine and chemokine producation as well as TNF/TNFA and CSF2/GMCSF production in normal human keratinocytes. Exhibits hemolytic activity against red blood cells. In terms of biological role, exhibits antimicrobial activity against E.coli and B.megaterium (in vitro). The chain is Cathelicidin antimicrobial peptide from Hylobates moloch (Silvery gibbon).